A 566-amino-acid polypeptide reads, in one-letter code: Endoglucanase G (566 aa).

The first 30 residues, 1-30 (MKKAKAIFSLVVALMVLAIFCFAQNTGSTA), serve as a signal peptide directing secretion. Glu226 serves as the catalytic Proton donor. The active-site Nucleophile is the Glu381. The disordered stretch occupies residues 473–494 (GTPQASDPPATPTATPTKPAAS). Positions 474-494 (TPQASDPPATPTATPTKPAAS) are enriched in low complexity. The Dockerin domain maps to 497–564 (PSFIYGDINS…LLRSIDKLPH (68 aa)).

Belongs to the glycosyl hydrolase 5 (cellulase A) family.

The enzyme catalyses Endohydrolysis of (1-&gt;4)-beta-D-glucosidic linkages in cellulose, lichenin and cereal beta-D-glucans.. Its function is as follows. This enzyme catalyzes the endohydrolysis of 1,4-beta-glucosidic linkages in cellulose, lichenin and cereal beta-D-glucans. The polypeptide is Endoglucanase G (celG) (Acetivibrio thermocellus (strain ATCC 27405 / DSM 1237 / JCM 9322 / NBRC 103400 / NCIMB 10682 / NRRL B-4536 / VPI 7372) (Clostridium thermocellum)).